The sequence spans 420 residues: Protein translocase subunit SecY (420 aa).

The next 10 membrane-spanning stretches (helical) occupy residues 9–29, 61–81, 104–124, 141–161, 173–193, 203–223, 257–277, 300–320, 355–375, and 377–397; these read ILIT…PIPG, LSII…MELL, IVRY…SVGL, VFMI…MWIG, ISLI…SGTF, ILML…IIYV, LSGV…STIL, YNIL…SIVF, KLTL…WILV, and AMGV…QVAI.

This sequence belongs to the SecY/SEC61-alpha family. In terms of assembly, component of the Sec protein translocase complex. Heterotrimer consisting of SecY, SecE and SecG subunits. The heterotrimers can form oligomers, although 1 heterotrimer is thought to be able to translocate proteins. Interacts with the ribosome. Interacts with SecDF, and other proteins may be involved. Interacts with SecA.

The protein resides in the cell inner membrane. Its function is as follows. The central subunit of the protein translocation channel SecYEG. Consists of two halves formed by TMs 1-5 and 6-10. These two domains form a lateral gate at the front which open onto the bilayer between TMs 2 and 7, and are clamped together by SecE at the back. The channel is closed by both a pore ring composed of hydrophobic SecY resides and a short helix (helix 2A) on the extracellular side of the membrane which forms a plug. The plug probably moves laterally to allow the channel to open. The ring and the pore may move independently. The protein is Protein translocase subunit SecY of Helicobacter pylori (strain J99 / ATCC 700824) (Campylobacter pylori J99).